The following is a 363-amino-acid chain: Phospho-N-acetylmuramoyl-pentapeptide-transferase (363 aa).

Helical transmembrane passes span 33 to 53 (YAVL…GVLP), 82 to 102 (GVIF…PSFV), 105 to 125 (LILL…CAQV), 133 to 153 (GALD…FYFH), 166 to 186 (PVFV…WMSI), 198 to 218 (LSGA…YFLL), 227 to 247 (LLVP…ALAG), 271 to 291 (ALGF…LLLM), 295 to 315 (VILV…FFHV), and 340 to 360 (VLLR…GVLF).

The protein belongs to the glycosyltransferase 4 family. MraY subfamily. Requires Mg(2+) as cofactor.

It localises to the cell inner membrane. It carries out the reaction UDP-N-acetyl-alpha-D-muramoyl-L-alanyl-gamma-D-glutamyl-meso-2,6-diaminopimeloyl-D-alanyl-D-alanine + di-trans,octa-cis-undecaprenyl phosphate = di-trans,octa-cis-undecaprenyl diphospho-N-acetyl-alpha-D-muramoyl-L-alanyl-D-glutamyl-meso-2,6-diaminopimeloyl-D-alanyl-D-alanine + UMP. The protein operates within cell wall biogenesis; peptidoglycan biosynthesis. Catalyzes the initial step of the lipid cycle reactions in the biosynthesis of the cell wall peptidoglycan: transfers peptidoglycan precursor phospho-MurNAc-pentapeptide from UDP-MurNAc-pentapeptide onto the lipid carrier undecaprenyl phosphate, yielding undecaprenyl-pyrophosphoryl-MurNAc-pentapeptide, known as lipid I. The polypeptide is Phospho-N-acetylmuramoyl-pentapeptide-transferase (Treponema pallidum (strain Nichols)).